A 1095-amino-acid polypeptide reads, in one-letter code: Putative disease resistance protein At4g11170 (1095 aa).

Residues 9–173 (WRYDVFPSFR…TISKDVLEKL (165 aa)) enclose the TIR domain. The active site involves E84. The NB-ARC domain maps to 168 to 454 (DVLEKLNATP…HENYLKQMII (287 aa)). LRR repeat units follow at residues 609–631 (CLVELNMSHSKLKKLWSGVQPLR), 632–654 (NLRTMNLNSSRNLEILPNLMEAT), 655–677 (KLNRLDLGWCESLVELPSSIKNL), 679–701 (HLILLEMSCCKKLEIIPTNINLP), 702–722 (SLEVLHFRYCTRLQTFPEIST), and 723–744 (NIRLLNLIGTAITEVPPSVKYW).

The enzyme catalyses NAD(+) + H2O = ADP-D-ribose + nicotinamide + H(+). The polypeptide is Putative disease resistance protein At4g11170 (Arabidopsis thaliana (Mouse-ear cress)).